We begin with the raw amino-acid sequence, 421 residues long: Serine hydroxymethyltransferase (421 aa).

Residues L121 and 125 to 127 (GHL) contribute to the (6S)-5,6,7,8-tetrahydrofolate site. K230 carries the N6-(pyridoxal phosphate)lysine modification.

Belongs to the SHMT family. As to quaternary structure, homodimer. Pyridoxal 5'-phosphate is required as a cofactor.

The protein localises to the cytoplasm. The enzyme catalyses (6R)-5,10-methylene-5,6,7,8-tetrahydrofolate + glycine + H2O = (6S)-5,6,7,8-tetrahydrofolate + L-serine. Its pathway is one-carbon metabolism; tetrahydrofolate interconversion. It functions in the pathway amino-acid biosynthesis; glycine biosynthesis; glycine from L-serine: step 1/1. Catalyzes the reversible interconversion of serine and glycine with tetrahydrofolate (THF) serving as the one-carbon carrier. This reaction serves as the major source of one-carbon groups required for the biosynthesis of purines, thymidylate, methionine, and other important biomolecules. Also exhibits THF-independent aldolase activity toward beta-hydroxyamino acids, producing glycine and aldehydes, via a retro-aldol mechanism. The sequence is that of Serine hydroxymethyltransferase from Carboxydothermus hydrogenoformans (strain ATCC BAA-161 / DSM 6008 / Z-2901).